The following is an 832-amino-acid chain: Protein PPP4R3C (832 aa).

Residues 708 to 832 (RTQEGEAVMP…SPKKKPHLSS (125 aa)) are disordered. Basic and acidic residues-rich tracts occupy residues 725-735 (FTETKRTHQEG) and 749-765 (METK…DSPK). The segment covering 769 to 779 (SGDFKFSSSYS) has biased composition (low complexity). A compositionally biased stretch (acidic residues) spans 801-820 (PDDEEEKEEDEEEKEEDKED).

It belongs to the SMEK family.

The protein is Protein PPP4R3C of Homo sapiens (Human).